Here is a 739-residue protein sequence, read N- to C-terminus: Gamma-tubulin complex component 4 homolog (739 aa).

Belongs to the TUBGCP family.

The protein localises to the cytoplasm. The protein resides in the cytoskeleton. Its subcellular location is the microtubule organizing center. Its function is as follows. Gamma-tubulin complex is necessary for microtubule nucleation at the microtubule organizing centers (MTOCs). The polypeptide is Gamma-tubulin complex component 4 homolog (85P) (Medicago truncatula (Barrel medic)).